Here is an 86-residue protein sequence, read N- to C-terminus: Protein Tat (86 aa).

Positions 1-21 (MDPVDPNIEPWNHPGSQPKTA) are disordered. The tract at residues 1–24 (MDPVDPNIEPWNHPGSQPKTACNR) is interaction with human CREBBP. The tract at residues 1 to 48 (MDPVDPNIEPWNHPGSQPKTACNRCHCKKCCYHCQVCFITKGLGISYG) is transactivation. Positions 22, 25, and 27 each coordinate Zn(2+). The tract at residues 22–37 (CNRCHCKKCCYHCQVC) is cysteine-rich. At K28 the chain carries N6-acetyllysine; by host PCAF. Positions 30, 33, 34, and 37 each coordinate Zn(2+). The interval 38 to 48 (FITKGLGISYG) is core. The interval 47–86 (YGRKKRRQRRRPSQGGQTHQDPIPKQPSSQPRGDPTGPKE) is disordered. Residues 48–58 (GRKKRRQRRRP) are compositionally biased toward basic residues. Residues 49-57 (RKKRRQRRR) carry the Nuclear localization signal, RNA-binding (TAR), and protein transduction motif. The interaction with the host capping enzyme RNGTT stretch occupies residues 49-86 (RKKRRQRRRPSQGGQTHQDPIPKQPSSQPRGDPTGPKE). N6-acetyllysine; by host EP300 and GCN5L2 occurs at positions 50 and 51. Asymmetric dimethylarginine; by host PRMT6 occurs at positions 52 and 53. Residues 60-77 (QGGQTHQDPIPKQPSSQP) show a composition bias toward polar residues. A Glycyl lysine isopeptide (Lys-Gly) (interchain with G-Cter in ubiquitin) cross-link involves residue K71. Positions 78 to 80 (RGD) match the Cell attachment site motif.

The protein belongs to the lentiviruses Tat family. Interacts with host CCNT1. Associates with the P-TEFb complex composed at least of Tat, P-TEFb (CDK9 and CCNT1), TAR RNA, RNA Pol II. Recruits the HATs CREBBP, TAF1/TFIID, EP300, PCAF and GCN5L2. Interacts with host KAT5/Tip60; this interaction targets the latter to degradation. Interacts with the host deacetylase SIRT1. Interacts with host capping enzyme RNGTT; this interaction stimulates RNGTT. Binds to host KDR, and to the host integrins ITGAV/ITGB3 and ITGA5/ITGB1. Interacts with host KPNB1/importin beta-1 without previous binding to KPNA1/importin alpha-1. Interacts with EIF2AK2. Interacts with host nucleosome assembly protein NAP1L1; this interaction may be required for the transport of Tat within the nucleus, since the two proteins interact at the nuclear rim. Interacts with host C1QBP/SF2P32; this interaction involves lysine-acetylated Tat. Interacts with the host chemokine receptors CCR2, CCR3 and CXCR4. Interacts with host DPP4/CD26; this interaction may trigger an anti-proliferative effect. Interacts with host LDLR. Interacts with the host extracellular matrix metalloproteinase MMP1. Interacts with host PRMT6; this interaction mediates Tat's methylation. Interacts with, and is ubiquitinated by MDM2/Hdm2. Interacts with host PSMC3 and HTATIP2. Interacts with STAB1; this interaction may overcome SATB1-mediated repression of IL2 and IL2RA (interleukin) in T cells by binding to the same domain than HDAC1. Interacts (when acetylated) with human CDK13, thereby increasing HIV-1 mRNA splicing and promoting the production of the doubly spliced HIV-1 protein Nef. Interacts with host TBP; this interaction modulates the activity of transcriptional pre-initiation complex. Interacts with host RELA. Interacts with host PLSCR1; this interaction negatively regulates Tat transactivation activity by altering its subcellular distribution. Post-translationally, asymmetrical arginine methylation by host PRMT6 seems to diminish the transactivation capacity of Tat and affects the interaction with host CCNT1. In terms of processing, acetylation by EP300, CREBBP, GCN5L2/GCN5 and PCAF regulates the transactivation activity of Tat. EP300-mediated acetylation of Lys-50 promotes dissociation of Tat from the TAR RNA through the competitive binding to PCAF's bromodomain. In addition, the non-acetylated Tat's N-terminus can also interact with PCAF. PCAF-mediated acetylation of Lys-28 enhances Tat's binding to CCNT1. Lys-50 is deacetylated by SIRT1. Polyubiquitination by host MDM2 does not target Tat to degradation, but activates its transactivation function and fosters interaction with CCNT1 and TAR RNA. Post-translationally, phosphorylated by EIF2AK2 on serine and threonine residues adjacent to the basic region important for TAR RNA binding and function. Phosphorylation of Tat by EIF2AK2 is dependent on the prior activation of EIF2AK2 by dsRNA.

It localises to the host nucleus. The protein resides in the host nucleolus. The protein localises to the host cytoplasm. It is found in the secreted. Transcriptional activator that increases RNA Pol II processivity, thereby increasing the level of full-length viral transcripts. Recognizes a hairpin structure at the 5'-LTR of the nascent viral mRNAs referred to as the transactivation responsive RNA element (TAR) and recruits the cyclin T1-CDK9 complex (P-TEFb complex) that will in turn hyperphosphorylate the RNA polymerase II to allow efficient elongation. The CDK9 component of P-TEFb and other Tat-activated kinases hyperphosphorylate the C-terminus of RNA Pol II that becomes stabilized and much more processive. Other factors such as HTATSF1/Tat-SF1, SUPT5H/SPT5, and HTATIP2 are also important for Tat's function. Besides its effect on RNA Pol II processivity, Tat induces chromatin remodeling of proviral genes by recruiting the histone acetyltransferases (HATs) CREBBP, EP300 and PCAF to the chromatin. This also contributes to the increase in proviral transcription rate, especially when the provirus integrates in transcriptionally silent region of the host genome. To ensure maximal activation of the LTR, Tat mediates nuclear translocation of NF-kappa-B by interacting with host RELA. Through its interaction with host TBP, Tat may also modulate transcription initiation. Tat can reactivate a latently infected cell by penetrating in it and transactivating its LTR promoter. In the cytoplasm, Tat is thought to act as a translational activator of HIV-1 mRNAs. Its function is as follows. Extracellular circulating Tat can be endocytosed by surrounding uninfected cells via the binding to several surface receptors such as CD26, CXCR4, heparan sulfate proteoglycans (HSPG) or LDLR. Neurons are rarely infected, but they internalize Tat via their LDLR. Through its interaction with nuclear HATs, Tat is potentially able to control the acetylation-dependent cellular gene expression. Modulates the expression of many cellular genes involved in cell survival, proliferation or in coding for cytokines or cytokine receptors. Tat plays a role in T-cell and neurons apoptosis. Tat induced neurotoxicity and apoptosis probably contribute to neuroAIDS. Circulating Tat also acts as a chemokine-like and/or growth factor-like molecule that binds to specific receptors on the surface of the cells, affecting many cellular pathways. In the vascular system, Tat binds to ITGAV/ITGB3 and ITGA5/ITGB1 integrins dimers at the surface of endothelial cells and competes with bFGF for heparin-binding sites, leading to an excess of soluble bFGF. The protein is Protein Tat of Human immunodeficiency virus type 1 group M subtype D (isolate Z2/CDC-Z34) (HIV-1).